The primary structure comprises 642 residues: MPVITLPDGSQRHYDHPVSPMDVALDIGPGLAKATIAGRVNGELVDASDLIENDATLSIITAKDEEGLEIIRHSCAHLLGHAIKQLWPHTKMAIGPVVDNGFYYDVDLDRTLTQEDVEALEKRMHELAEKNYDVIKKKVSWHDARETFVKRGETYKVAILDENIAHDDKPGLYHHEEYVDMCRGPHVPNMRFCHHFKLMKTAGAYWRGDSNNKMLQRIYGTAWADKKALNAYLQRLEEAAKRDHRKIGKQLDLYHMQEEAPGMVFWHNDGWTIFRELEVFVRSKLKEYQYQEVKGPFMMDRVLWEKTGHWDNYKDAMFTTSSENREYCIKPMNCPGHVQIFNQGLKSYRDLPLRMAEFGSCHRNEPSGALHGLMRVRGFTQDDAHIFCTEEQIRDEVNACIRMVYDMYSTFGFEKIVVKLSTRPDKRIGSDEMWDRAEADLAVALEENNIPFEYQLGEGAFYGPKIEFTLYDCLDRAWQCGTVQLDFSLPSRLSASYVGEDNERKVPVMIHRAILGSMERFIGILTEEFAGFFPTWLAPVQVVVMNITDSQSEYVNELTQKLQNAGIRVKADLRNEKIGFKIREHTLRRVPYMLVCGDKEVEAGKVAVRTRRGKDLGSLDVNDVIEKLQQEIRSRSLQQLEE.

Residues Met-1–Thr-61 enclose the TGS domain. The interval Asp-243 to Pro-534 is catalytic. The Zn(2+) site is built by Cys-334, His-385, and His-511.

The protein belongs to the class-II aminoacyl-tRNA synthetase family. Homodimer. Requires Zn(2+) as cofactor.

It localises to the cytoplasm. The catalysed reaction is tRNA(Thr) + L-threonine + ATP = L-threonyl-tRNA(Thr) + AMP + diphosphate + H(+). Functionally, catalyzes the attachment of threonine to tRNA(Thr) in a two-step reaction: L-threonine is first activated by ATP to form Thr-AMP and then transferred to the acceptor end of tRNA(Thr). Also edits incorrectly charged L-seryl-tRNA(Thr). The polypeptide is Threonine--tRNA ligase (Salmonella heidelberg (strain SL476)).